We begin with the raw amino-acid sequence, 325 residues long: 6-hydroxymellein 5-farnesyltransferase cdmH (325 aa).

The next 5 helical transmembrane spans lie at 60–80 (ASIL…GAAG), 113–133 (AFTW…AMLG), 138–158 (WPFM…KRPI), 169–189 (LLGI…YGPC), and 192–212 (ISEI…WSFY). N-linked (GlcNAc...) asparagine glycosylation is present at N214. The next 3 helical transmembrane spans lie at 243–263 (ALLA…LRPF), 267–287 (WLWL…LLSF), and 295–315 (GGVL…ACTL).

This sequence belongs to the UbiA prenyltransferase family. Mg(2+) serves as cofactor.

The protein resides in the membrane. It carries out the reaction 6-hydroxymellein + (2E,6E)-farnesyl diphosphate = verruculide C + diphosphate. The protein operates within secondary metabolite biosynthesis; terpenoid biosynthesis. Functionally, 6-hydroxymellein 5-farnesyltransferase; part of the gene cluster that mediates the biosynthesis of chrodrimanin B, a meroterpenoid that acts as a potent blocker of insect GABA-gated chloride channels. The first step of the pathway is the biosynthesis of 6-hydroxymellein by the polyketide synthase cdmE. The prenyltransferase cdmH acts as a 6-hydroxymellein 5-farnesyltransferase and produces the hydrophobic metabolite verruculide C. The FAD-dependent monooxygenase cdmI further converts verruculide C into verruculide B. The terpene cyclase cdmG then produced the pentacyclic molecule 3-hydroxypentacecilide A, the backbone structure of chrodrimanin B, via folding the farnesyl moiety of the substrate into the chair-boat conformation. The short-chain dehydrogenase/reductase cdmF functions as the 3-OH dehydrogenase that oxidizes the C-3 hydroxyl group of 3-hydroxypentacecilide A and produces chrodrimanin C, the dehydrogenated product of 3-hydroxypentacecilide A. The cytochrome P450 monooxygenase cdmJ then accepts both 3-hydroxypentacecilide A and chrodrimanin C and functions as a C-7-beta-hydroxylase to produce respectively chrodrimanin H and chrodrimanin F. The dioxygenase cdmA accepts chrodrimanin H to afford chrodrimanin E, which is further transformed to chrodrimanin A by the dioxygenase cdmD. CdmA can also accept chrodrimanin C as substrate to convert it into verruculide A, which is further converted into chrodrimanin T by cdmD. The last step of the biosynthesis is proposed to be performed by the acetyltransferase cdmC which acetylates chrodrimanin A to yield chrodrimanin B. The pathway may also lead to the production of additional shunt products, including chrodrimanins T and U. This Talaromyces verruculosus (Penicillium verruculosum) protein is 6-hydroxymellein 5-farnesyltransferase cdmH.